Reading from the N-terminus, the 327-residue chain is Putative cyclin-dependent kinase F-2 (327 aa).

A Protein kinase domain is found at 4–295 (YECLGKIGEG…AADALRCAWF (292 aa)). ATP-binding positions include 10–18 (IGEGAAGVV) and K33. Catalysis depends on D134, which acts as the Proton acceptor. A Phosphothreonine modification is found at T167.

The protein belongs to the protein kinase superfamily. CMGC Ser/Thr protein kinase family. CDC2/CDKX subfamily.

The catalysed reaction is L-seryl-[protein] + ATP = O-phospho-L-seryl-[protein] + ADP + H(+). The enzyme catalyses L-threonyl-[protein] + ATP = O-phospho-L-threonyl-[protein] + ADP + H(+). It carries out the reaction [DNA-directed RNA polymerase] + ATP = phospho-[DNA-directed RNA polymerase] + ADP + H(+). The sequence is that of Putative cyclin-dependent kinase F-2 (CDKF-2) from Oryza sativa subsp. japonica (Rice).